The primary structure comprises 356 residues: 3-dehydroquinate synthase (356 aa).

NAD(+) is bound by residues Gly106 to Asp110, Thr130 to Ser131, Lys143, Lys152, and Phe170 to Thr173. Zn(2+) is bound by residues Glu185, His246, and His263.

This sequence belongs to the sugar phosphate cyclases superfamily. Dehydroquinate synthase family. NAD(+) serves as cofactor. It depends on Co(2+) as a cofactor. The cofactor is Zn(2+).

It localises to the cytoplasm. The enzyme catalyses 7-phospho-2-dehydro-3-deoxy-D-arabino-heptonate = 3-dehydroquinate + phosphate. Its pathway is metabolic intermediate biosynthesis; chorismate biosynthesis; chorismate from D-erythrose 4-phosphate and phosphoenolpyruvate: step 2/7. Catalyzes the conversion of 3-deoxy-D-arabino-heptulosonate 7-phosphate (DAHP) to dehydroquinate (DHQ). The protein is 3-dehydroquinate synthase of Clostridium acetobutylicum (strain ATCC 824 / DSM 792 / JCM 1419 / IAM 19013 / LMG 5710 / NBRC 13948 / NRRL B-527 / VKM B-1787 / 2291 / W).